The sequence spans 418 residues: MLHPRARTMLLLSLPAVAIGIASSLILIVVMKIASALQNLLWQRLPGTLGIAQDSPLWIIGVLTLTGIAVGLVIRFSQGHAGPDPACEPLIGAPVPPSALPGLIVALILGLAGGVSLGPEHPIMTVNIALAVAIGARLLPRVNRMEWTILASAGTIGALFGTPVAAALIFSQTLNGSSEVPLWDRLFAPLMAAAAGALTTGLFFHPHFSLPIAHYGQMEMTDILSGAIVAAIAIAAGMVAVWCLPRLHSMMHQMKNPVLVLGIGGFILGILGVIGGPVSLFKGLDEMQQMVANQAFSTSDYFLLAVIKLAALVVAAASGFRGGRIFPAVFVGVALGLMLHEHVPAVPAAITVSCAILGIVLVVTRDGWLSLFMAAVVVPNTTLLPLLCIVMLPAWLLLAGKPMMMVNRPKQQPPHDNV.

12 helical membrane passes run 10-30, 54-74, 99-119, 120-140, 149-169, 186-206, 223-243, 258-278, 300-320, 322-342, 343-363, and 371-391; these read LLLS…LIVV, DSPL…GLVI, ALPG…SLGP, EHPI…RLLP, ILAS…AALI, LFAP…FFHP, ILSG…AVWC, VLVL…GGPV, DYFL…ASGF, GGRI…LHEH, VPAV…VLVV, and LFMA…CIVM.

The protein belongs to the chloride channel (TC 2.A.49) family.

The protein localises to the cell membrane. In Escherichia coli (strain 55989 / EAEC), this protein is Putative ion-transport protein YfeO.